Consider the following 249-residue polypeptide: 5'-nucleotidase SurE (249 aa).

The a divalent metal cation site is built by aspartate 9, aspartate 10, serine 40, and asparagine 92.

The protein belongs to the SurE nucleotidase family. It depends on a divalent metal cation as a cofactor.

It localises to the cytoplasm. The enzyme catalyses a ribonucleoside 5'-phosphate + H2O = a ribonucleoside + phosphate. Functionally, nucleotidase that shows phosphatase activity on nucleoside 5'-monophosphates. In Shewanella sediminis (strain HAW-EB3), this protein is 5'-nucleotidase SurE.